A 455-amino-acid chain; its full sequence is Ammonium transporter Rh type B (455 aa).

Topologically, residues 1 to 10 are cytoplasmic; the sequence is MARVPRHRRL. The chain crosses the membrane as a helical span at residues 11–31; it reads VLPLLCLLFQGATALLFAIFV. Residues 32–58 are Extracellular-facing; that stretch reads RYNHETDAALWHWGNHSNVDNEFYFRY. Residue Asn46 is glycosylated (N-linked (GlcNAc...) asparagine). Residues 59–79 traverse the membrane as a helical segment; that stretch reads PSFQDVHVMVFVGFGFLMVFL. Over 80 to 83 the chain is Cytoplasmic; that stretch reads QRYG. The helical transmembrane segment at 84-104 threads the bilayer; that stretch reads FSSVGFTFLVASLTLQWATLL. Residues 105–121 lie on the Extracellular side of the membrane; the sequence is QGFLHSFHGGHIHVGVE. The helical transmembrane segment at 122–142 threads the bilayer; sequence SLINADFCAGAVLISFGAVLG. Residues 143–146 are Cytoplasmic-facing; that stretch reads KTGP. A helical membrane pass occupies residues 147–167; sequence AQLLLMALLEAVLFSVNEFIL. The Extracellular portion of the chain corresponds to 168–175; the sequence is LSLLGVRD. The chain crosses the membrane as a helical span at residues 176 to 198; that stretch reads AGGSMTIHTFGAYFGLFLSWVLY. Topologically, residues 199-216 are cytoplasmic; the sequence is RSQLEKSRHRQSSVYNSD. Residues 217-237 form a helical membrane-spanning segment; sequence LFAMIGTIFLWVFWPSFNSAP. The Extracellular portion of the chain corresponds to 238–248; sequence TALGDGQHRTV. The chain crosses the membrane as a helical span at residues 249–269; the sequence is VNTYYSLTASTLSTFALSALV. At 270 to 279 the chain is on the cytoplasmic side; it reads SGDGRLDMVH. The chain crosses the membrane as a helical span at residues 280-300; that stretch reads VQNAALAGGVVVGTSSEMMLT. Pro301 is a topological domain (extracellular). Residues 302-322 form a helical membrane-spanning segment; that stretch reads FGALAAGFLAGTVSTLGYKFF. The Cytoplasmic segment spans residues 323-343; that stretch reads TPILESRFKLQDTCGVHNLHG. Residues 344-364 traverse the membrane as a helical segment; the sequence is MPGVLGAILGVVVAALATHEA. Over 365–390 the chain is Extracellular; it reads YGDGLQSVFPLIAKGQRSATSQAVYQ. The helical transmembrane segment at 391–411 threads the bilayer; sequence LFGMFVTLVFASVGGSLGGLL. Residues 412 to 455 are Cytoplasmic-facing; that stretch reads LRLPFLDSPPDSQCFEDQVYWEVPGEQETETQRPLRGGESDTRA. The interval 413 to 421 is interaction with ANK3; that stretch reads RLPFLDSPP. The interval 434 to 455 is disordered; sequence VPGEQETETQRPLRGGESDTRA. A compositionally biased stretch (basic and acidic residues) spans 441-455; it reads ETQRPLRGGESDTRA.

Belongs to the ammonium transporter (TC 2.A.49) family. Rh subfamily. As to quaternary structure, interacts (via C-terminus) with ANK2 and ANK3; required for targeting to the basolateral membrane. Post-translationally, N-glycosylated. In terms of tissue distribution, expressed in kidney by connecting segments and collecting tubules. Also expressed in liver by perivenous hepatocytes. Expressed in the forestomach and the fundus of the stomach. Expressed in duodenum, jejunum, ileum and colon at the level of villous (at protein level). Specifically expressed in kidney where it is restricted to the epithelial linings of the convoluted tubules and the loop of Henle. Also detected in ovary. Expressed by hepatocytes and dermal hair follicles and papillae.

Its subcellular location is the cell membrane. The protein localises to the basolateral cell membrane. The catalysed reaction is NH4(+)(in) = NH4(+)(out). It catalyses the reaction methylamine(out) = methylamine(in). The enzyme catalyses CO2(out) = CO2(in). Its activity is regulated as follows. Inhibited by amiloride. In terms of biological role, ammonium transporter involved in the maintenance of acid-base homeostasis. Transports ammonium and its related derivative methylammonium across the basolateral plasma membrane of epithelial cells likely contributing to renal transepithelial ammonia transport and ammonia metabolism. May transport either NH4(+) or NH3 ammonia species predominantly mediating an electrogenic NH4(+) transport. May act as a CO2 channel providing for renal acid secretion. This is Ammonium transporter Rh type B (Rhbg) from Mus musculus (Mouse).